A 361-amino-acid chain; its full sequence is Phosphoserine aminotransferase (361 aa).

Arginine 42 lines the L-glutamate pocket. Pyridoxal 5'-phosphate-binding positions include 76–77 (AS), tryptophan 102, threonine 152, aspartate 172, and glutamine 195. Lysine 196 is subject to N6-(pyridoxal phosphate)lysine. Residue 237-238 (NT) participates in pyridoxal 5'-phosphate binding.

Belongs to the class-V pyridoxal-phosphate-dependent aminotransferase family. SerC subfamily. Homodimer. It depends on pyridoxal 5'-phosphate as a cofactor.

It localises to the cytoplasm. The catalysed reaction is O-phospho-L-serine + 2-oxoglutarate = 3-phosphooxypyruvate + L-glutamate. It carries out the reaction 4-(phosphooxy)-L-threonine + 2-oxoglutarate = (R)-3-hydroxy-2-oxo-4-phosphooxybutanoate + L-glutamate. Its pathway is amino-acid biosynthesis; L-serine biosynthesis; L-serine from 3-phospho-D-glycerate: step 2/3. Catalyzes the reversible conversion of 3-phosphohydroxypyruvate to phosphoserine and of 3-hydroxy-2-oxo-4-phosphonooxybutanoate to phosphohydroxythreonine. The chain is Phosphoserine aminotransferase from Halalkalibacterium halodurans (strain ATCC BAA-125 / DSM 18197 / FERM 7344 / JCM 9153 / C-125) (Bacillus halodurans).